Reading from the N-terminus, the 727-residue chain is NADH-ubiquinone oxidoreductase 75 kDa subunit, mitochondrial (727 aa).

The N-terminal 23 residues, 1-23 (MLRIPVRKALVGLSKSPKGCVRT), are a transit peptide targeting the mitochondrion. The region spanning 30–108 (NLIEVFVDGQ…GWNILTNSEK (79 aa)) is the 2Fe-2S ferredoxin-type domain. Positions 64, 75, and 78 each coordinate [2Fe-2S] cluster. At Lys84 the chain carries N6-acetyllysine. Cys92 is a [2Fe-2S] cluster binding site. Residues 108 to 147 (KSKKAREGVMEFLLANHPLDCPICDQGGECDLQDQSMMFG) form the 4Fe-4S His(Cys)3-ligated-type domain. Residues His124, Cys128, Cys131, Cys137, Cys176, Cys179, Cys182, and Cys226 each contribute to the [4Fe-4S] cluster site. The 4Fe-4S Mo/W bis-MGD-type domain occupies 245 to 301 (TRKTESIDVMDAVGSNIVVSTRTGEVMRILPRMHEDINEXWISDKTRFAYDGLKRQR). 3 positions are modified to N6-acetyllysine: Lys467, Lys499, and Lys709.

The protein belongs to the complex I 75 kDa subunit family. Core subunit of respiratory chain NADH dehydrogenase (Complex I) which is composed of 45 different subunits. This is the largest subunit of complex I and it is a component of the iron-sulfur (IP) fragment of the enzyme. Complex I associates with ubiquinol-cytochrome reductase complex (Complex III) to form supercomplexes. Interacts with MDM2 and AKAP1. Requires [2Fe-2S] cluster as cofactor. It depends on [4Fe-4S] cluster as a cofactor.

It is found in the mitochondrion inner membrane. The enzyme catalyses a ubiquinone + NADH + 5 H(+)(in) = a ubiquinol + NAD(+) + 4 H(+)(out). Functionally, core subunit of the mitochondrial membrane respiratory chain NADH dehydrogenase (Complex I) which catalyzes electron transfer from NADH through the respiratory chain, using ubiquinone as an electron acceptor. Essential for catalysing the entry and efficient transfer of electrons within complex I. Plays a key role in the assembly and stability of complex I and participates in the association of complex I with ubiquinol-cytochrome reductase complex (Complex III) to form supercomplexes. This chain is NADH-ubiquinone oxidoreductase 75 kDa subunit, mitochondrial (NDUFS1), found in Gorilla gorilla gorilla (Western lowland gorilla).